The following is a 197-amino-acid chain: Large ribosomal subunit protein bL25 (197 aa).

Belongs to the bacterial ribosomal protein bL25 family. CTC subfamily. Part of the 50S ribosomal subunit; part of the 5S rRNA/L5/L18/L25 subcomplex. Contacts the 5S rRNA. Binds to the 5S rRNA independently of L5 and L18.

In terms of biological role, this is one of the proteins that binds to the 5S RNA in the ribosome where it forms part of the central protuberance. This is Large ribosomal subunit protein bL25 from Caulobacter vibrioides (strain ATCC 19089 / CIP 103742 / CB 15) (Caulobacter crescentus).